We begin with the raw amino-acid sequence, 103 residues long: MYAVFQSGGKQHRVAEGHTVRLEKLEVATGSTVEFDQVLLIADGETVHVGAPLVAGGKVVAEVVSHGRGEKVTIVKFRRRKHHDKKMGHRQWFTEVKITAINA.

The protein belongs to the bacterial ribosomal protein bL21 family. As to quaternary structure, part of the 50S ribosomal subunit. Contacts protein L20.

Functionally, this protein binds to 23S rRNA in the presence of protein L20. The polypeptide is Large ribosomal subunit protein bL21 (Shewanella putrefaciens (strain CN-32 / ATCC BAA-453)).